A 79-amino-acid polypeptide reads, in one-letter code: Dicentracin (79 aa).

The signal sequence occupies residues 1–22 (MKCATLFLVLSMVVLMAEPGDA). Gly44 carries the post-translational modification Glycine amide. Residues 47–79 (AQQDQQDQQYQQDQQDQQAEQYQRFNRERAAFD) constitute a propeptide that is removed on maturation. A disordered region spans residues 48–67 (QQDQQDQQYQQDQQDQQAEQ).

Belongs to the pleurocidin family.

It is found in the secreted. This chain is Dicentracin, found in Dicentrarchus labrax (European seabass).